The chain runs to 211 residues: SAGA-associated factor 11 homolog (211 aa).

The SGF11-type zinc finger occupies 115–136 (CTCPHCDRLVAAARFAPHLEKC). The segment at 153–211 (TKEGASASSSSTSTYIQSGGNTGGTDDEDDVDWSSDKRKKKSTQNSRNNGSKKNNGKIF) is disordered. Low complexity predominate over residues 157–166 (ASASSSSTST). Ser-187 carries the post-translational modification Phosphoserine. Residues 197 to 211 (NSRNNGSKKNNGKIF) show a composition bias toward low complexity.

The protein belongs to the SGF11 family. Component of some SAGA transcription coactivator-HAT complexes, at least composed of Ada2b, not/nonstop, Pcaf/Gcn5, Sgf11 and Spt3. Within the SAGA complex, Sgf11, e(y)2, and not/nonstop form an additional subcomplex of SAGA called the DUB module (deubiquitination module). Interacts directly with not/nonstop. Interacts with the AMEX complex component xmas-2. Interacts with Cbp80; important for promoter recruitment of Sgf11 that is not associated with the DUB module.

It localises to the nucleus. The protein localises to the nucleoplasm. Its subcellular location is the cytoplasm. Its function is as follows. Component of the transcription regulatory histone acetylation (HAT) complex SAGA, a multiprotein complex that activates transcription by remodeling chromatin and mediating histone acetylation and deubiquitination. Within the SAGA complex, participates in a subcomplex that specifically deubiquitinates histone H2B. The SAGA complex is recruited to specific gene promoters by activators, where it is required for transcription. Required for nuclear receptor-mediated transactivation. Binds independently on SAGA to promoters in an RNA-dependent manner. Binds to mRNA and is essential for total mRNA export from the nucleus. Required to counteract heterochromatin silencing. Controls the development of neuronal connectivity in visual system by being required for accurate axon targeting in the optic lobe. Required for expression of ecdysone-induced genes such as br/broad. The sequence is that of SAGA-associated factor 11 homolog from Drosophila mojavensis (Fruit fly).